We begin with the raw amino-acid sequence, 417 residues long: Serine hydroxymethyltransferase (417 aa).

(6S)-5,6,7,8-tetrahydrofolate is bound by residues Leu121 and 125–127 (GHL). Lys230 bears the N6-(pyridoxal phosphate)lysine mark. 355 to 357 (SPF) is a binding site for (6S)-5,6,7,8-tetrahydrofolate.

This sequence belongs to the SHMT family. Homodimer. Pyridoxal 5'-phosphate serves as cofactor.

It is found in the cytoplasm. It carries out the reaction (6R)-5,10-methylene-5,6,7,8-tetrahydrofolate + glycine + H2O = (6S)-5,6,7,8-tetrahydrofolate + L-serine. The protein operates within one-carbon metabolism; tetrahydrofolate interconversion. Its pathway is amino-acid biosynthesis; glycine biosynthesis; glycine from L-serine: step 1/1. Its function is as follows. Catalyzes the reversible interconversion of serine and glycine with tetrahydrofolate (THF) serving as the one-carbon carrier. This reaction serves as the major source of one-carbon groups required for the biosynthesis of purines, thymidylate, methionine, and other important biomolecules. Also exhibits THF-independent aldolase activity toward beta-hydroxyamino acids, producing glycine and aldehydes, via a retro-aldol mechanism. This chain is Serine hydroxymethyltransferase, found in Legionella pneumophila subsp. pneumophila (strain Philadelphia 1 / ATCC 33152 / DSM 7513).